Here is an 84-residue protein sequence, read N- to C-terminus: Small ribosomal subunit protein bS18B (84 aa).

Belongs to the bacterial ribosomal protein bS18 family. As to quaternary structure, part of the 30S ribosomal subunit. Forms a tight heterodimer with protein bS6.

Functionally, binds as a heterodimer with protein bS6 to the central domain of the 16S rRNA, where it helps stabilize the platform of the 30S subunit. The sequence is that of Small ribosomal subunit protein bS18B from Mycolicibacterium smegmatis (strain ATCC 700084 / mc(2)155) (Mycobacterium smegmatis).